Reading from the N-terminus, the 128-residue chain is Glyoxylase-like domain-containing protein (128 aa).

Positions 6–125 constitute a VOC domain; it reads QISGIEIPAT…EGNTHAICTR (120 aa).

It participates in mycotoxin biosynthesis. Its function is as follows. Glyoxylase-like domain-containing protein; part of the gene cluster that mediates the biosynthesis of the selective antifungal agent ascochitine, an o-quinone methide that plays a possible protective role against other microbial competitors in nature and is considered to be important for pathogenicity of legume-associated Didymella species. The pathway probably begins with the synthesis of a keto-aldehyde intermediate by the ascochitine non-reducing polyketide synthase pksAC from successive condensations of 4 malonyl-CoA units, presumably with a simple acetyl-CoA starter unit. Release of the keto-aldehyde intermediate is consistent with the presence of the C-terminal reductive release domain. The HR-PKS (orf7) probably makes a diketide starter unit which is passed to the non-reducing polyketide synthase pksAC for further extension, producing ascochital and ascochitine. The aldehyde dehydrogenase (orf1), the 2-oxoglutarate-dependent dioxygenase (orf3) and the dehydrogenase (orf9) are probably involved in subsequent oxidations of methyl groups to the carboxylic acid of the heterocyclic ring. The ascochitine gene cluster also includes a gene encoding a short peptide with a cupin domain (orf2) that is often found in secondary metabolite gene clusters and which function has still to be determined. The protein is Glyoxylase-like domain-containing protein of Didymella fabae (Leaf and pod spot disease fungus).